The primary structure comprises 339 residues: Phosphate acyltransferase (339 aa).

The protein belongs to the PlsX family. Homodimer. Probably interacts with PlsY.

Its subcellular location is the cytoplasm. The enzyme catalyses a fatty acyl-[ACP] + phosphate = an acyl phosphate + holo-[ACP]. It participates in lipid metabolism; phospholipid metabolism. Its function is as follows. Catalyzes the reversible formation of acyl-phosphate (acyl-PO(4)) from acyl-[acyl-carrier-protein] (acyl-ACP). This enzyme utilizes acyl-ACP as fatty acyl donor, but not acyl-CoA. This is Phosphate acyltransferase from Helicobacter acinonychis (strain Sheeba).